The sequence spans 154 residues: uncharacterized protein (154 aa).

The disordered stretch occupies residues 1-37; it reads MDNLKEKPLSYNINNNNLNNNNNNNNNNNNNNNNINN. Residues 12 to 37 show a composition bias toward low complexity; it reads NINNNNLNNNNNNNNNNNNNNNNINN. N-linked (GlcNAc...) asparagine glycosylation occurs at Asn-82. The chain crosses the membrane as a helical span at residues 116–136; that stretch reads IIITTIVVLLMIAVSLGLILA. Asn-149 carries an N-linked (GlcNAc...) asparagine glycan.

It is found in the membrane. This is an uncharacterized protein from Dictyostelium discoideum (Social amoeba).